The sequence spans 513 residues: MLPRSLGHSTSELSPPFDGPNGVERYVSETRSLLRKGYEKYLRRGVPFQMRNPVEELGAQVVLPPKYLDEVKRAPTDLFSFEAYSEKAFLLNYSRAPRQTEAAAHIVRVDLTRNLGKLITFYSDFAIFEVCLPLVLIRDLGALVTDLWNESALYLDKTYNSEWQTKQAYEVVCGFVARVTSVAMVGAPLCRNPVWNRIVVETTMASFGAAQAIKDKYSARWRWLAPWSESIQKDLRRIRKESIELLKPLYEDRKAAVSRSDDVQGSSEMFRDTLYWLITSNQKDRSLSGITESQLFLSLAAIHTTSATLNSFVYDWIAHPEYHGEILAEVKETLAQVQLNGGKWTLQHVAMLRKLDSFMKESARINPIGFVSIQRYTLKPYTFKDGFQLPAGVSFVFHSDGVHHDADNYPDPEKFDAYRHLHLRETVDPNRFHFASVSDSALGFGAGNHACPGRFLSAIIMKFFLIQFMTAYEMKYEHGGIERLPNHDNSNTTAPNRTVNLLVRRCDGTSNNA.

The segment at 1–21 is disordered; sequence MLPRSLGHSTSELSPPFDGPN. C451 is a heme binding site.

This sequence belongs to the cytochrome P450 family. It depends on heme as a cofactor.

The protein operates within secondary metabolite biosynthesis. Functionally, cytochrome P450 monooxygenase; part of the gene cluster that mediates the biosynthesis of a tyrosine-derived cytochalasan acting as a fungal signal recognized by resistant rice plants and leads to avirulence in Pi33 resistant rice cultivars. The first step in the pathway is catalyzed by the hybrid PKS-NRPS ACE1, assisted by the enoyl reductase RAP1, that are responsible for fusion of the tyrosine precursor and the polyketide backbone. The polyketide synthase module (PKS) of ACE1 is responsible for the synthesis of the polyketide backbone and the downstream nonribosomal peptide synthetase (NRPS) amidates the carboxyl end of the polyketide with the tyrosine precursor. Because ACE1 lacks a designated enoylreductase (ER) domain, the required activity is provided the enoyl reductase RAP1. Reduction by the hydrolyase ORFZ, followed by dehydration and intra-molecular Diels-Alder cyclization by the Diels-Alderase ORF3 then yield the required isoindolone-fused macrocycle. A number of oxidative steps catalyzed by the tailoring enzymes identified within the cluster, including cytochrome P450 monooxygenases CYP1 to CYP4, the FAD-linked oxidoreductase OXR2 and the short-chain dehydrogenase/reductase OXR1, are further required to afford the final cytochalasans that confer avirulence and which have still to be identified. The monooxygenase CYP1 has been shown to be a site-selective C-18 hydroxylase whereas the function of CYP3 is the site-selective epoxidation of the C-6/C-7 olefin that is present in some intermediate compounds. Finally, SYN2 and RAP2 are not required for avirulence in Pi33 resistant rice cultivars. The protein is Cytochrome P450 monooxygenase CYP3 of Pyricularia oryzae (strain 70-15 / ATCC MYA-4617 / FGSC 8958) (Rice blast fungus).